Here is a 210-residue protein sequence, read N- to C-terminus: Large ribosomal subunit protein uL4 (210 aa).

The segment covering 41–51 (QNNARQGNASA) has biased composition (polar residues). The segment at 41–77 (QNNARQGNASAKTRAEVRGGGRKPWKQKGTGRARAGS) is disordered. Positions 60–71 (GGRKPWKQKGTG) are enriched in basic residues.

The protein belongs to the universal ribosomal protein uL4 family. In terms of assembly, part of the 50S ribosomal subunit.

Its function is as follows. One of the primary rRNA binding proteins, this protein initially binds near the 5'-end of the 23S rRNA. It is important during the early stages of 50S assembly. It makes multiple contacts with different domains of the 23S rRNA in the assembled 50S subunit and ribosome. In terms of biological role, forms part of the polypeptide exit tunnel. In Synechocystis sp. (strain ATCC 27184 / PCC 6803 / Kazusa), this protein is Large ribosomal subunit protein uL4.